The chain runs to 31 residues: Cytochrome b6-f complex subunit 6 (31 aa).

The helical transmembrane segment at 3–23 (TITSYFGFLLAVLTITSGLFI) threads the bilayer.

The protein belongs to the PetL family. As to quaternary structure, the 4 large subunits of the cytochrome b6-f complex are cytochrome b6, subunit IV (17 kDa polypeptide, PetD), cytochrome f and the Rieske protein, while the 4 small subunits are PetG, PetL, PetM and PetN. The complex functions as a dimer.

The protein localises to the plastid. It is found in the chloroplast thylakoid membrane. In terms of biological role, component of the cytochrome b6-f complex, which mediates electron transfer between photosystem II (PSII) and photosystem I (PSI), cyclic electron flow around PSI, and state transitions. PetL is important for photoautotrophic growth as well as for electron transfer efficiency and stability of the cytochrome b6-f complex. The polypeptide is Cytochrome b6-f complex subunit 6 (Lotus japonicus (Lotus corniculatus var. japonicus)).